We begin with the raw amino-acid sequence, 157 residues long: Putative pre-16S rRNA nuclease (157 aa).

This sequence belongs to the YqgF nuclease family.

It localises to the cytoplasm. In terms of biological role, could be a nuclease involved in processing of the 5'-end of pre-16S rRNA. In Anaplasma marginale (strain St. Maries), this protein is Putative pre-16S rRNA nuclease.